Reading from the N-terminus, the 517-residue chain is MGCVFCKKLEPASKEDVGLEGDFRSQTAEERYFPDPTQGRTSSVFPQPTSPAFLNTGNMRSISGTGVTIFVALYDYEARTGDDLTFTKGEKFHILNNTEYDWWEARSLSSGHRGYVPSNYVAPVDSIQAEEWYFGKISRKDAERQLLSSGNPQGAFLIRESETTKGAYSLSIRDWDQNRGDHIKHYKIRKLDTGGYYITTRAQFDSIQDLVRHYMEVNDGLCYLLTAPCTTTKPQTLGLAKDAWEIDRNSIALERRLGTGCFGDVWLGTWNCSTKVAVKTLKPGTMSPKAFLEEAQIMKLLRHDKLVQLYAVVSEEPIYIVTEFMCYGSLLDFLKDREGQNLMLPHLVDMAAQVAEGMAYMERMNYIHRDLRAANILVGEYLICKIADFGLARLIEDNEYNPQQGTKFPIKWTAPEAALFGRFTVKSDVWSFGILLTELITKGRVPYPGMNNREVLEQVEHGYHMPCPPGCPASLYEVMEQAWRLDPEERPTFEYLQSFLEDYFTSTEPQYQPGDQT.

Residue Gly-2 is the site of N-myristoyl glycine attachment. Residues Cys-3 and Cys-6 are each lipidated (S-palmitoyl cysteine). Position 13 is a phosphoserine (Ser-13). Phosphotyrosine is present on Tyr-32. Ser-50 carries the phosphoserine modification. Positions 65 to 126 (TGVTIFVALY…PSNYVAPVDS (62 aa)) constitute an SH3 domain. The tract at residues 102–103 (WW) is interaction with CLNK. The SH2 domain maps to 132–229 (WYFGKISRKD…GLCYLLTAPC (98 aa)). The residue at position 196 (Tyr-196) is a Phosphotyrosine. The residue at position 206 (Ser-206) is a Phosphoserine. Residues 251 to 504 (IALERRLGTG…YLQSFLEDYF (254 aa)) enclose the Protein kinase domain. Residues 257–265 (LGTGCFGDV) and Lys-279 each bind ATP. Asp-370 serves as the catalytic Proton acceptor. Tyr-400 carries the post-translational modification Phosphotyrosine. Tyr-511 is subject to Phosphotyrosine; by SRC.

The protein belongs to the protein kinase superfamily. Tyr protein kinase family. SRC subfamily. As to quaternary structure, interacts with ITGB1, ITGB2, MS4A2/FCER1B, FCER1G and FCGR2. Interacts (via SH2 domain) with SYK (tyrosine phosphorylated). Interacts (via SH2 domain) with FLT3 (tyrosine phosphorylated). Interacts with PTK2/FAK1. Interacts (via SH2 domain) with HCLS1 (tyrosine phosphorylated by SYK). Interacts with SIRPA and PTPNS1. Interacts (not phosphorylated on tyrosine residues) with CBL; FGR tyrosine phosphorylation promotes dissociation. Interacts with CLNK. Post-translationally, ubiquitinated. Becomes ubiquitinated in response to ITGB2 signaling; this does not lead to degradation. In terms of processing, phosphorylated. Autophosphorylated on tyrosine residues. Becomes phosphorylated in response to FCGR2 engagement, cell adhesion and signaling by ITGB2. Prior phosphorylation at Tyr-511 by SRC inhibits ulterior autophosphorylation at Tyr-400. Expressed in natural killer cells (at protein level).

The protein localises to the cell membrane. It localises to the cell projection. Its subcellular location is the ruffle membrane. It is found in the cytoplasm. The protein resides in the cytosol. The protein localises to the cytoskeleton. It localises to the mitochondrion inner membrane. Its subcellular location is the mitochondrion intermembrane space. It catalyses the reaction L-tyrosyl-[protein] + ATP = O-phospho-L-tyrosyl-[protein] + ADP + H(+). With respect to regulation, activated by autophosphorylation. Prior phosphorylation at Tyr-511 by SRC inhibits ulterior autophosphorylation at Tyr-400. Activated by phorbol myristate acetate, phosphatidic acid and poly-Lys. Binding (via SH2 domain) of HCLS1 that is already phosphorylated by SYK strongly increases kinase activity. In terms of biological role, non-receptor tyrosine-protein kinase that transmits signals from cell surface receptors devoid of kinase activity and contributes to the regulation of immune responses, including neutrophil, monocyte, macrophage and mast cell functions, cytoskeleton remodeling in response to extracellular stimuli, phagocytosis, cell adhesion and migration. Promotes mast cell degranulation, release of inflammatory cytokines and IgE-mediated anaphylaxis. Acts downstream of receptors that bind the Fc region of immunoglobulins, such as MS4A2/FCER1B, FCER1G and FCGR2. Acts downstream of ITGB1 and ITGB2, and regulates actin cytoskeleton reorganization, cell spreading and adhesion. Depending on the context, activates or inhibits cellular responses. Functions as a negative regulator of ITGB2 signaling, phagocytosis and SYK activity in monocytes. Required for normal ITGB1 and ITGB2 signaling, normal cell spreading and adhesion in neutrophils and macrophages. Functions as a positive regulator of cell migration and regulates cytoskeleton reorganization via RAC1 activation. Phosphorylates SYK (in vitro) and promotes SYK-dependent activation of AKT1 and MAP kinase signaling. Phosphorylates PLD2 in antigen-stimulated mast cells, leading to PLD2 activation and the production of the signaling molecules lysophosphatidic acid and diacylglycerol. Promotes activation of PIK3R1. Phosphorylates FASLG, and thereby regulates its ubiquitination and subsequent internalization. Phosphorylates ABL1. Promotes phosphorylation of CBL, CTTN, PIK3R1, PTK2/FAK1, PTK2B/PYK2 and VAV2. Phosphorylates HCLS1 that has already been phosphorylated by SYK, but not unphosphorylated HCLS1. Together with CLNK, it acts as a negative regulator of natural killer cell-activating receptors and inhibits interferon-gamma production. The sequence is that of Tyrosine-protein kinase Fgr (Fgr) from Mus musculus (Mouse).